A 290-amino-acid polypeptide reads, in one-letter code: 4-hydroxy-tetrahydrodipicolinate synthase (290 aa).

Position 44 (T44) interacts with pyruvate. Y132 serves as the catalytic Proton donor/acceptor. The Schiff-base intermediate with substrate role is filled by K160. A pyruvate-binding site is contributed by I202.

This sequence belongs to the DapA family. Homotetramer; dimer of dimers.

Its subcellular location is the cytoplasm. The catalysed reaction is L-aspartate 4-semialdehyde + pyruvate = (2S,4S)-4-hydroxy-2,3,4,5-tetrahydrodipicolinate + H2O + H(+). Its pathway is amino-acid biosynthesis; L-lysine biosynthesis via DAP pathway; (S)-tetrahydrodipicolinate from L-aspartate: step 3/4. Its function is as follows. Catalyzes the condensation of (S)-aspartate-beta-semialdehyde [(S)-ASA] and pyruvate to 4-hydroxy-tetrahydrodipicolinate (HTPA). This Ruegeria pomeroyi (strain ATCC 700808 / DSM 15171 / DSS-3) (Silicibacter pomeroyi) protein is 4-hydroxy-tetrahydrodipicolinate synthase.